The following is a 125-amino-acid chain: NADH-ubiquinone oxidoreductase chain 1 (125 aa).

3 helical membrane passes run 5-25 (IFAFFELITFLVPVLLAVAFL), 74-94 (YLFFASPVLFLTLALLLWNFM), and 105-125 (LSLLLVLGLSSLSVYAILGSG).

This sequence belongs to the complex I subunit 1 family.

The protein resides in the mitochondrion inner membrane. The catalysed reaction is a ubiquinone + NADH + 5 H(+)(in) = a ubiquinol + NAD(+) + 4 H(+)(out). Functionally, core subunit of the mitochondrial membrane respiratory chain NADH dehydrogenase (Complex I) that is believed to belong to the minimal assembly required for catalysis. Complex I functions in the transfer of electrons from NADH to the respiratory chain. The immediate electron acceptor for the enzyme is believed to be ubiquinone. In Arbacia lixula (Black urchin), this protein is NADH-ubiquinone oxidoreductase chain 1 (ND1).